We begin with the raw amino-acid sequence, 202 residues long: Dephospho-CoA kinase (202 aa).

A DPCK domain is found at Lys-6–Leu-202. Ser-14–Glu-19 provides a ligand contact to ATP.

The protein belongs to the CoaE family.

The protein localises to the cytoplasm. It catalyses the reaction 3'-dephospho-CoA + ATP = ADP + CoA + H(+). Its pathway is cofactor biosynthesis; coenzyme A biosynthesis; CoA from (R)-pantothenate: step 5/5. Functionally, catalyzes the phosphorylation of the 3'-hydroxyl group of dephosphocoenzyme A to form coenzyme A. The chain is Dephospho-CoA kinase from Chlamydia pneumoniae (Chlamydophila pneumoniae).